Consider the following 84-residue polypeptide: Beta-mammal toxin Cn2 (84 aa).

An N-terminal signal peptide occupies residues 1–16 (LLIITACLALIGTVWA). The 66-residue stretch at 17–82 (KEGYLVDKNT…VWPLPNKRCS (66 aa)) folds into the LCN-type CS-alpha/beta domain. 4 disulfide bridges follow: Cys-28–Cys-81, Cys-32–Cys-57, Cys-41–Cys-62, and Cys-45–Cys-64. Serine amide is present on Ser-82.

Belongs to the long (4 C-C) scorpion toxin superfamily. Sodium channel inhibitor family. Beta subfamily. Expressed by the venom gland.

It localises to the secreted. Its function is as follows. Mammal beta-toxins bind voltage-independently at site-4 of sodium channels (Nav) and shift the activation voltage to more negative potentials. This toxin is active against mammals. This is Beta-mammal toxin Cn2 from Centruroides noxius (Mexican scorpion).